The chain runs to 215 residues: 3-demethoxyubiquinol 3-hydroxylase (215 aa).

Fe cation-binding residues include Glu64, Glu94, His97, Glu146, Glu178, and His181.

The protein belongs to the COQ7 family. The cofactor is Fe cation.

The protein resides in the cell membrane. The enzyme catalyses a 5-methoxy-2-methyl-3-(all-trans-polyprenyl)benzene-1,4-diol + AH2 + O2 = a 3-demethylubiquinol + A + H2O. It participates in cofactor biosynthesis; ubiquinone biosynthesis. In terms of biological role, catalyzes the hydroxylation of 2-nonaprenyl-3-methyl-6-methoxy-1,4-benzoquinol during ubiquinone biosynthesis. This chain is 3-demethoxyubiquinol 3-hydroxylase, found in Pseudomonas fluorescens (strain Pf0-1).